The sequence spans 436 residues: Magnesium transporter MRS2-B (436 aa).

Composition is skewed to low complexity over residues 1 to 14 and 29 to 54; these read MSAA…GDSA and VASV…FPGG. The disordered stretch occupies residues 1-60; sequence MSAAAASSAAGDSAKQPLLHHQRGNPPHVASVSSPSLPSAPPGALAGGRRFPGGLDVPNL. Positions 176 to 242 form a coiled coil; sequence LALEAACSFL…RDEIEQLMDD (67 aa). The next 2 membrane-spanning stretches (helical) occupy residues 372 to 392 and 408 to 428; these read LLLT…GIFG and WVLI…LWFF. Positions 392–394 match the Required for magnesium transport activity motif; that stretch reads GMN.

This sequence belongs to the CorA metal ion transporter (MIT) (TC 1.A.35.5) family.

It is found in the membrane. Functionally, magnesium transporter that may mediate the influx of magnesium. This chain is Magnesium transporter MRS2-B (MRS2-B), found in Oryza sativa subsp. indica (Rice).